Consider the following 554-residue polypeptide: Alpha-taxilin (554 aa).

Residues 1–66 (MKNQDKKNGP…ARAKAAQPGA (66 aa)) form a disordered region. Ser71 bears the Phosphoserine mark. A disordered region spans residues 85-166 (YCVDNNQGGP…RRPQEKKKAK (82 aa)). Residues 91-103 (QGGPAEEGAQGEP) show a composition bias toward low complexity. The segment covering 143 to 158 (EEIRASDEVGDRDHRR) has biased composition (basic and acidic residues). The stretch at 186-491 (EEKLAALCKK…NKRVQDLTAG (306 aa)) forms a coiled coil. The disordered stretch occupies residues 492-554 (GITDIGSERR…GPGEPTPATA (63 aa)). Residues Ser515 and Ser523 each carry the phosphoserine modification.

Belongs to the taxilin family. As to quaternary structure, binds to the C-terminal coiled coil region of syntaxin family members STX1A, STX3A and STX4A, but not when these proteins are complexed with SNAP25, VAMP2 or STXBP1, suggesting that it interacts with syntaxins that do not form the SNARE complex.

In terms of biological role, may be involved in intracellular vesicle traffic and potentially in calcium-dependent exocytosis in neuroendocrine cells. The chain is Alpha-taxilin (Txlna) from Mus musculus (Mouse).